The primary structure comprises 202 residues: Small ribosomal subunit protein uS4c (202 aa).

The S4 RNA-binding domain maps to 90-153 (MRLDNVIFRL…KSETIISKNI (64 aa)).

This sequence belongs to the universal ribosomal protein uS4 family. In terms of assembly, part of the 30S ribosomal subunit. Contacts protein S5. The interaction surface between S4 and S5 is involved in control of translational fidelity.

It localises to the plastid. Its subcellular location is the chloroplast. Functionally, one of the primary rRNA binding proteins, it binds directly to 16S rRNA where it nucleates assembly of the body of the 30S subunit. Its function is as follows. With S5 and S12 plays an important role in translational accuracy. In Hylocomium splendens (Glittering wood-moss), this protein is Small ribosomal subunit protein uS4c (rps4).